The primary structure comprises 263 residues: uncharacterized protein (263 aa).

31–38 is an ATP binding site; it reads GPTGSGKT.

It belongs to the CbbQ/NirQ/NorQ/GpvN family.

This is an uncharacterized protein from Staphylococcus aureus (strain NCTC 8325 / PS 47).